We begin with the raw amino-acid sequence, 280 residues long: Lacto-N-neotetraose biosynthesis glycosyltransferase LgtE (280 aa).

Belongs to the glycosyltransferase 25 family.

It functions in the pathway glycan metabolism; lacto-N-neotetraose biosynthesis. It participates in bacterial outer membrane biogenesis; lipooligosaccharide biosynthesis. Adds the first galactose to the lacto-N-tetraose chain in lipooligosaccharide (LOS). This chain is Lacto-N-neotetraose biosynthesis glycosyltransferase LgtE (lgtE), found in Neisseria meningitidis serogroup B (strain ATCC BAA-335 / MC58).